Here is a 180-residue protein sequence, read N- to C-terminus: Large ribosomal subunit protein bL17 (180 aa).

The segment at 134-180 (AQAKAKKAAAMPTEESEAKPAEEGDVVGASEPDAKAPEEPPTEAPEN) is disordered.

Belongs to the bacterial ribosomal protein bL17 family. Part of the 50S ribosomal subunit. Contacts protein L32.

The protein is Large ribosomal subunit protein bL17 of Mycobacterium tuberculosis (strain CDC 1551 / Oshkosh).